Here is a 193-residue protein sequence, read N- to C-terminus: MKIYQIDSSARKEGSSSRALAKKLLNKIKKPGDEVIYRDLDDDMLFVSGLTESGMKIAEKDQTEEHKKMFELSDKLVSELKESDIIIISAPIYNYGPPATLKAWCDLAARIGETFKFKPNGRREGLLKNKQAYLVITSGGTKLNSSEDFLTPWLKFILNFFGIEKVEVISADQMALDYEKSIKEAEKQIENII.

Residues serine 9, 15-17, and 137-140 contribute to the FMN site; these read SSS and TSGG.

This sequence belongs to the azoreductase type 1 family. Homodimer. Requires FMN as cofactor.

It catalyses the reaction 2 a quinone + NADH + H(+) = 2 a 1,4-benzosemiquinone + NAD(+). It carries out the reaction N,N-dimethyl-1,4-phenylenediamine + anthranilate + 2 NAD(+) = 2-(4-dimethylaminophenyl)diazenylbenzoate + 2 NADH + 2 H(+). Its function is as follows. Quinone reductase that provides resistance to thiol-specific stress caused by electrophilic quinones. Functionally, also exhibits azoreductase activity. Catalyzes the reductive cleavage of the azo bond in aromatic azo compounds to the corresponding amines. The sequence is that of FMN-dependent NADH:quinone oxidoreductase from Pelagibacter ubique (strain HTCC1062).